The sequence spans 119 residues: Putative membrane protein insertion efficiency factor (119 aa).

Residues asparagine 82 to alanine 119 are disordered.

It belongs to the UPF0161 family.

It is found in the cell membrane. Could be involved in insertion of integral membrane proteins into the membrane. The chain is Putative membrane protein insertion efficiency factor from Streptomyces griseus subsp. griseus (strain JCM 4626 / CBS 651.72 / NBRC 13350 / KCC S-0626 / ISP 5235).